Reading from the N-terminus, the 145-residue chain is Hemoglobin subunit beta (145 aa).

In terms of domain architecture, Globin spans 1–145 (MLTAEEKAAV…VANALAHRYH (145 aa)). Thr-11 carries the post-translational modification Phosphothreonine. Ser-43 carries the phosphoserine modification. Lys-58 is modified (N6-acetyllysine). His-62 contacts heme b. Lys-81 carries the post-translational modification N6-acetyllysine. His-91 provides a ligand contact to heme b. At Cys-92 the chain carries S-nitrosocysteine.

This sequence belongs to the globin family. As to quaternary structure, heterotetramer of two alpha chains and two beta chains. Red blood cells.

Its function is as follows. Involved in oxygen transport from the lung to the various peripheral tissues. In terms of biological role, functions as an endogenous inhibitor of enkephalin-degrading enzymes such as DPP3, and may thereby play a role as a regulator of pain and inflammation. This is Hemoglobin subunit beta (HBB) from Bos taurus (Bovine).